A 102-amino-acid polypeptide reads, in one-letter code: Protein RnfH (102 aa).

It belongs to the UPF0125 (RnfH) family.

This is Protein RnfH from Pseudomonas entomophila (strain L48).